Consider the following 422-residue polypeptide: MAKQIQAIRGMNDCLPTQSALWQKVEGTIKQVVSAYGYNEIRMPIVESTHLFKRAIGEVTDVVEKEMYTFEDRNGDSLTLRPEGTAGCVRAGIQNGLLYNQEQRLWYIGPMFRYERPQKGRYRQFHQVGVEVFGLNGPDVDAELIMMTARLWRELGINQHVRLELNSIGSLDARATYREALIAFLEQHLEVLDEDCKRRMHTNPLRVLDTKNPAVQEILVDAPKLSEYLDDDSKAHFAGLCELLDAAGIEYQVNERLVRGLDYYNRTVFEWITESLGAQGTVCGGGRYDGLVEQLGGKATPAVGFAMGVERLVLLMETLELADVRRSVDAYVVTVGEGTMMAGMKLAEKLRENVPGLRVMNHFGGGNFKKQFKRADNVGAAIALVLGENEIADNTVVVKDLRGGEQTTMAQDEVTAKLAELI.

It belongs to the class-II aminoacyl-tRNA synthetase family. In terms of assembly, homodimer.

The protein localises to the cytoplasm. The enzyme catalyses tRNA(His) + L-histidine + ATP = L-histidyl-tRNA(His) + AMP + diphosphate + H(+). This is Histidine--tRNA ligase (hisS) from Photobacterium profundum (strain SS9).